A 500-amino-acid polypeptide reads, in one-letter code: Glutamate--tRNA ligase (500 aa).

Residues 13–23 (PSPTGTPHVGM) carry the 'HIGH' region motif. The 'KMSKS' region motif lies at 258-262 (KLSKR). ATP is bound at residue K261.

This sequence belongs to the class-I aminoacyl-tRNA synthetase family. Glutamate--tRNA ligase type 1 subfamily. Monomer.

The protein localises to the cytoplasm. The catalysed reaction is tRNA(Glu) + L-glutamate + ATP = L-glutamyl-tRNA(Glu) + AMP + diphosphate. Functionally, catalyzes the attachment of glutamate to tRNA(Glu) in a two-step reaction: glutamate is first activated by ATP to form Glu-AMP and then transferred to the acceptor end of tRNA(Glu). The polypeptide is Glutamate--tRNA ligase (Corynebacterium jeikeium (strain K411)).